We begin with the raw amino-acid sequence, 200 residues long: NADH-quinone oxidoreductase subunit B (200 aa).

Residues C78, C79, C144, and C174 each contribute to the [4Fe-4S] cluster site.

Belongs to the complex I 20 kDa subunit family. NDH-1 is composed of 14 different subunits. Subunits NuoB, C, D, E, F, and G constitute the peripheral sector of the complex. Requires [4Fe-4S] cluster as cofactor.

Its subcellular location is the cell membrane. The enzyme catalyses a quinone + NADH + 5 H(+)(in) = a quinol + NAD(+) + 4 H(+)(out). Functionally, NDH-1 shuttles electrons from NADH, via FMN and iron-sulfur (Fe-S) centers, to quinones in the respiratory chain. The immediate electron acceptor for the enzyme in this species is believed to be ubiquinone. Couples the redox reaction to proton translocation (for every two electrons transferred, four hydrogen ions are translocated across the cytoplasmic membrane), and thus conserves the redox energy in a proton gradient. The polypeptide is NADH-quinone oxidoreductase subunit B (Dehalococcoides mccartyi (strain ATCC BAA-2266 / KCTC 15142 / 195) (Dehalococcoides ethenogenes (strain 195))).